The chain runs to 355 residues: 3-dehydroquinate synthase (355 aa).

NAD(+) contacts are provided by residues 67–72 (DGEIYK), 101–105 (GVIGD), 125–126 (TT), Lys138, Lys147, and 165–168 (FLNT). 3 residues coordinate Zn(2+): Glu180, His243, and His260.

Belongs to the sugar phosphate cyclases superfamily. Dehydroquinate synthase family. The cofactor is NAD(+). Co(2+) serves as cofactor. Zn(2+) is required as a cofactor.

The protein resides in the cytoplasm. It carries out the reaction 7-phospho-2-dehydro-3-deoxy-D-arabino-heptonate = 3-dehydroquinate + phosphate. It functions in the pathway metabolic intermediate biosynthesis; chorismate biosynthesis; chorismate from D-erythrose 4-phosphate and phosphoenolpyruvate: step 2/7. Catalyzes the conversion of 3-deoxy-D-arabino-heptulosonate 7-phosphate (DAHP) to dehydroquinate (DHQ). This Buchnera aphidicola subsp. Baizongia pistaciae (strain Bp) protein is 3-dehydroquinate synthase.